The sequence spans 233 residues: Purine nucleoside phosphorylase DeoD-type (233 aa).

H4 lines the a purine D-ribonucleoside pocket. Phosphate is bound by residues G20, R24, R43, and 87–90; that span reads RIGT. A purine D-ribonucleoside is bound by residues 179–181 and 203–204; these read EME and SD. The active-site Proton donor is the D204.

This sequence belongs to the PNP/UDP phosphorylase family. In terms of assembly, homohexamer; trimer of homodimers.

It carries out the reaction a purine D-ribonucleoside + phosphate = a purine nucleobase + alpha-D-ribose 1-phosphate. The catalysed reaction is a purine 2'-deoxy-D-ribonucleoside + phosphate = a purine nucleobase + 2-deoxy-alpha-D-ribose 1-phosphate. Catalyzes the reversible phosphorolytic breakdown of the N-glycosidic bond in the beta-(deoxy)ribonucleoside molecules, with the formation of the corresponding free purine bases and pentose-1-phosphate. This Helicobacter pylori (strain HPAG1) protein is Purine nucleoside phosphorylase DeoD-type.